Reading from the N-terminus, the 591-residue chain is L-gulonolactone oxidase 2 (591 aa).

The first 27 residues, 1-27 (MAFTFPPSYRTLVGLYYIFTLMHTAVS), serve as a signal peptide directing secretion. The region spanning 56 to 238 (STCRAANVAY…SQVTFELQPM (183 aa)) is the FAD-binding PCMH-type domain.

This sequence belongs to the oxygen-dependent FAD-linked oxidoreductase family. FAD is required as a cofactor.

It carries out the reaction L-gulono-1,4-lactone + O2 = L-ascorbate + H2O2 + H(+). The protein operates within cofactor biosynthesis; L-ascorbate biosynthesis. In terms of biological role, catalyzes the oxidation of L-gulono-1,4-lactone to ascorbic acid. L-gulono-1,4-lactone is oxidized to hydrogen peroxide and L-xylo-hexulonolactone which spontaneously isomerizes to L-ascorbate. The chain is L-gulonolactone oxidase 2 from Arabidopsis thaliana (Mouse-ear cress).